Reading from the N-terminus, the 283-residue chain is Thymidylate synthase (283 aa).

A dUMP-binding site is contributed by arginine 22. Cysteine 160 acts as the Nucleophile in catalysis. DUMP contacts are provided by residues 180–183 (RSCD), asparagine 191, and 221–223 (HIY). Position 183 (aspartate 183) interacts with (6R)-5,10-methylene-5,6,7,8-tetrahydrofolate. Residue serine 282 coordinates (6R)-5,10-methylene-5,6,7,8-tetrahydrofolate.

Belongs to the thymidylate synthase family. Bacterial-type ThyA subfamily. In terms of assembly, homodimer.

The protein resides in the cytoplasm. It catalyses the reaction dUMP + (6R)-5,10-methylene-5,6,7,8-tetrahydrofolate = 7,8-dihydrofolate + dTMP. The protein operates within pyrimidine metabolism; dTTP biosynthesis. Catalyzes the reductive methylation of 2'-deoxyuridine-5'-monophosphate (dUMP) to 2'-deoxythymidine-5'-monophosphate (dTMP) while utilizing 5,10-methylenetetrahydrofolate (mTHF) as the methyl donor and reductant in the reaction, yielding dihydrofolate (DHF) as a by-product. This enzymatic reaction provides an intracellular de novo source of dTMP, an essential precursor for DNA biosynthesis. The chain is Thymidylate synthase from Vibrio parahaemolyticus serotype O3:K6 (strain RIMD 2210633).